We begin with the raw amino-acid sequence, 582 residues long: Urocanate reductase (582 aa).

The N-terminal stretch at 1-20 (MHYKKSIIGIAVTATAIIAG) is a signal peptide. A lipid anchor (N-palmitoyl cysteine) is attached at cysteine 21. Residue cysteine 21 is the site of S-diacylglycerol cysteine attachment. Threonine 93 carries the FMN phosphoryl threonine modification. Alanine 143, glutamate 162, asparagine 170, serine 171, glycine 175, alanine 176, alanine 285, and aspartate 352 together coordinate FAD. The active-site Proton donor is arginine 411. FAD contacts are provided by histidine 521, glutamate 550, and alanine 565.

This sequence belongs to the FAD-dependent oxidoreductase 2 family. FRD/SDH subfamily. FAD is required as a cofactor. The cofactor is FMN.

The protein localises to the cell membrane. It carries out the reaction dihydrourocanate + A = urocanate + AH2. In terms of biological role, catalyzes the two-electron reduction of urocanate to dihydrourocanate (also named imidazole propionate or deamino-histidine). The physiological electron donor is unknown; it might be the membrane-bound tetraheme cytochrome c (CymA). Enables anaerobic growth with urocanate as a sole terminal electron acceptor, and thus can provide the cells with a niche where no other bacteria can compete and survive. Is unable to reduce cinnamate and other unsaturated organic acids such as acrylic, crotonic, fumaric and orotic acids. Has no fumarate reductase or succinate dehydrogenase activity. This is Urocanate reductase (urdA) from Shewanella oneidensis (strain ATCC 700550 / JCM 31522 / CIP 106686 / LMG 19005 / NCIMB 14063 / MR-1).